Consider the following 40-residue polypeptide: Photosystem II reaction center protein J (40 aa).

A helical transmembrane segment spans residues 8-28 (IPLWLVALVAGTGVLVVVGLF).

It belongs to the PsbJ family. PSII is composed of 1 copy each of membrane proteins PsbA, PsbB, PsbC, PsbD, PsbE, PsbF, PsbH, PsbI, PsbJ, PsbK, PsbL, PsbM, PsbT, PsbX, PsbY, PsbZ, Psb30/Ycf12, peripheral proteins PsbO, CyanoQ (PsbQ), PsbU, PsbV and a large number of cofactors. It forms dimeric complexes.

The protein resides in the cellular thylakoid membrane. One of the components of the core complex of photosystem II (PSII). PSII is a light-driven water:plastoquinone oxidoreductase that uses light energy to abstract electrons from H(2)O, generating O(2) and a proton gradient subsequently used for ATP formation. It consists of a core antenna complex that captures photons, and an electron transfer chain that converts photonic excitation into a charge separation. The protein is Photosystem II reaction center protein J of Trichodesmium erythraeum (strain IMS101).